Reading from the N-terminus, the 89-residue chain is Large ribosomal subunit protein bL27 (89 aa).

The segment at 1–24 (MAHKKAGGSSRNGRDSDGRRLGVK) is disordered.

Belongs to the bacterial ribosomal protein bL27 family.

This chain is Large ribosomal subunit protein bL27, found in Azorhizobium caulinodans (strain ATCC 43989 / DSM 5975 / JCM 20966 / LMG 6465 / NBRC 14845 / NCIMB 13405 / ORS 571).